A 156-amino-acid polypeptide reads, in one-letter code: Ribosomal RNA large subunit methyltransferase H (156 aa).

S-adenosyl-L-methionine contacts are provided by residues L73, G104, and 123-128 (LSPLTL).

This sequence belongs to the RNA methyltransferase RlmH family. In terms of assembly, homodimer.

It is found in the cytoplasm. It carries out the reaction pseudouridine(1915) in 23S rRNA + S-adenosyl-L-methionine = N(3)-methylpseudouridine(1915) in 23S rRNA + S-adenosyl-L-homocysteine + H(+). Its function is as follows. Specifically methylates the pseudouridine at position 1915 (m3Psi1915) in 23S rRNA. The sequence is that of Ribosomal RNA large subunit methyltransferase H from Yersinia enterocolitica serotype O:8 / biotype 1B (strain NCTC 13174 / 8081).